Consider the following 363-residue polypeptide: Aminomethyltransferase (363 aa).

Belongs to the GcvT family. In terms of assembly, the glycine cleavage system is composed of four proteins: P, T, L and H.

It catalyses the reaction N(6)-[(R)-S(8)-aminomethyldihydrolipoyl]-L-lysyl-[protein] + (6S)-5,6,7,8-tetrahydrofolate = N(6)-[(R)-dihydrolipoyl]-L-lysyl-[protein] + (6R)-5,10-methylene-5,6,7,8-tetrahydrofolate + NH4(+). Its function is as follows. The glycine cleavage system catalyzes the degradation of glycine. The polypeptide is Aminomethyltransferase (Staphylococcus aureus (strain MRSA252)).